The primary structure comprises 480 residues: Endoplasmic reticulum lectin 1 (480 aa).

The N-terminal stretch at 1-27 (MRRSDRFPCAGASLLVVLCGVFPSSFG) is a signal peptide. MRH domains follow at residues 108–245 (SSCS…LCNH) and 339–466 (SYCF…ICKI). An intrachain disulfide couples Cys-110 to Cys-123. Residues 152–172 (VKKSPSEAGENQEDKERTEGH) are disordered. Residues 163 to 172 (QEDKERTEGH) show a composition bias toward basic and acidic residues. Disulfide bonds link Cys-198/Cys-231, Cys-214/Cys-243, Cys-341/Cys-354, Cys-418/Cys-452, and Cys-433/Cys-464.

It is found in the endoplasmic reticulum lumen. Its function is as follows. Probable lectin that binds selectively to improperly folded lumenal proteins. May function in endoplasmic reticulum quality control and endoplasmic reticulum-associated degradation (ERAD) of both non-glycosylated proteins and glycoproteins. This Xenopus laevis (African clawed frog) protein is Endoplasmic reticulum lectin 1 (erlec1).